We begin with the raw amino-acid sequence, 687 residues long: Probable ATP-dependent RNA helicase Dbp73D (687 aa).

Disordered regions lie at residues 1-26 (MELF…TNNE) and 52-87 (TPIL…EEDV). Basic and acidic residues-rich tracts occupy residues 9–18 (YTEDLKEQKD) and 54–79 (ILEK…EKPL). Positions 160–168 (LFPVQKQVI) match the Q motif motif. Positions 177–381 (KPPPFRPRDI…DLRLFQPRLF (205 aa)) constitute a Helicase ATP-binding domain. 190 to 197 (APTGSGKT) lines the ATP pocket. The DEAD box motif lies at 305–308 (DEAD). Positions 434-583 (TVFALVEKYK…EIHVSPDIEI (150 aa)) constitute a Helicase C-terminal domain. Residues 646 to 675 (IVQSSKKSSETKNSKTKADKTKYQPKETKK) form a disordered region. The span at 652–675 (KSSETKNSKTKADKTKYQPKETKK) shows a compositional bias: basic and acidic residues.

The protein belongs to the DEAD box helicase family. DDX51/DBP6 subfamily. In terms of tissue distribution, expressed in the germline tissue of the ovary.

The protein localises to the nucleus. The protein resides in the nucleolus. It catalyses the reaction ATP + H2O = ADP + phosphate + H(+). Functionally, ATP-binding RNA helicase involved in the biogenesis of 60S ribosomal subunits. In Drosophila melanogaster (Fruit fly), this protein is Probable ATP-dependent RNA helicase Dbp73D (Dbp73D).